Reading from the N-terminus, the 35-residue chain is Photosystem II reaction center protein T (35 aa).

A helical transmembrane segment spans residues 3–23; sequence ALVYTFLLISTLGIIFFAIFF.

The protein belongs to the PsbT family. In terms of assembly, PSII is composed of 1 copy each of membrane proteins PsbA, PsbB, PsbC, PsbD, PsbE, PsbF, PsbH, PsbI, PsbJ, PsbK, PsbL, PsbM, PsbT, PsbY, PsbZ, Psb30/Ycf12, at least 3 peripheral proteins of the oxygen-evolving complex and a large number of cofactors. It forms dimeric complexes.

The protein resides in the plastid. It localises to the chloroplast thylakoid membrane. Functionally, found at the monomer-monomer interface of the photosystem II (PS II) dimer, plays a role in assembly and dimerization of PSII. PSII is a light-driven water plastoquinone oxidoreductase, using light energy to abstract electrons from H(2)O, generating a proton gradient subsequently used for ATP formation. In Aristolochia macrophylla (Dutchman's pipe vine), this protein is Photosystem II reaction center protein T.